Reading from the N-terminus, the 436-residue chain is 3-ketoacyl-CoA thiolase (436 aa).

Catalysis depends on C99, which acts as the Acyl-thioester intermediate. Residues H392 and C422 each act as proton acceptor in the active site.

It belongs to the thiolase-like superfamily. Thiolase family. Heterotetramer of two alpha chains (FadJ) and two beta chains (FadI).

The protein resides in the cytoplasm. The catalysed reaction is an acyl-CoA + acetyl-CoA = a 3-oxoacyl-CoA + CoA. It participates in lipid metabolism; fatty acid beta-oxidation. Functionally, catalyzes the final step of fatty acid oxidation in which acetyl-CoA is released and the CoA ester of a fatty acid two carbons shorter is formed. The sequence is that of 3-ketoacyl-CoA thiolase from Yersinia pseudotuberculosis serotype O:1b (strain IP 31758).